Consider the following 437-residue polypeptide: Methylenetetrahydrofolate--tRNA-(uracil-5-)-methyltransferase TrmFO (437 aa).

Glycine 10–glycine 15 contacts FAD.

Belongs to the MnmG family. TrmFO subfamily. FAD serves as cofactor.

The protein localises to the cytoplasm. The catalysed reaction is uridine(54) in tRNA + (6R)-5,10-methylene-5,6,7,8-tetrahydrofolate + NADH + H(+) = 5-methyluridine(54) in tRNA + (6S)-5,6,7,8-tetrahydrofolate + NAD(+). It catalyses the reaction uridine(54) in tRNA + (6R)-5,10-methylene-5,6,7,8-tetrahydrofolate + NADPH + H(+) = 5-methyluridine(54) in tRNA + (6S)-5,6,7,8-tetrahydrofolate + NADP(+). Catalyzes the folate-dependent formation of 5-methyl-uridine at position 54 (M-5-U54) in all tRNAs. The polypeptide is Methylenetetrahydrofolate--tRNA-(uracil-5-)-methyltransferase TrmFO (Geotalea daltonii (strain DSM 22248 / JCM 15807 / FRC-32) (Geobacter daltonii)).